We begin with the raw amino-acid sequence, 212 residues long: Peptidyl-prolyl cis-trans isomerase-like 3 (212 aa).

A PPIase cyclophilin-type domain is found at methionine 1–isoleucine 198.

This sequence belongs to the cyclophilin-type PPIase family. PPIL3 subfamily.

The enzyme catalyses [protein]-peptidylproline (omega=180) = [protein]-peptidylproline (omega=0). Its function is as follows. PPIases accelerate the folding of proteins. It catalyzes the cis-trans isomerization of proline imidic peptide bonds in oligopeptides. This Aspergillus fumigatus (strain ATCC MYA-4609 / CBS 101355 / FGSC A1100 / Af293) (Neosartorya fumigata) protein is Peptidyl-prolyl cis-trans isomerase-like 3 (cyp10).